Reading from the N-terminus, the 353-residue chain is THUMP domain-containing protein 1 (353 aa).

Polar residues predominate over residues 1 to 10; the sequence is MAAPAQQTTQ. 2 disordered regions span residues 1-20 and 73-96; these read MAAP…KGKA and YGPE…DDAE. A2 carries the N-acetylalanine modification. T79 bears the Phosphothreonine mark. Residues S86, S88, and S119 each carry the phosphoserine modification. Positions 147–254 constitute a THUMP domain; it reads DMYKTKKKKT…KAVCCLSVVK (108 aa). S270 bears the Phosphoserine mark. Residues 270 to 353 form a disordered region; that stretch reads SPKDPSQLNS…GSKSNENDFS (84 aa). Positions 273–282 are enriched in polar residues; the sequence is DPSQLNSKQG. Over residues 283–296 the composition is skewed to basic and acidic residues; it reads NGKEAKLESADKSD. The segment covering 297-327 has biased composition (polar residues); sequence QNNTAEGKNNQQVPENTEELGQTKPTSNPQV.

This sequence belongs to the THUMPD1 family. As to quaternary structure, interacts with NAT10. Binds tRNA.

In terms of biological role, functions as a tRNA-binding adapter to mediate NAT10-dependent tRNA acetylation modifying cytidine to N4-acetylcytidine (ac4C). The chain is THUMP domain-containing protein 1 (THUMPD1) from Homo sapiens (Human).